We begin with the raw amino-acid sequence, 180 residues long: ATP synthase subunit delta (180 aa).

This sequence belongs to the ATPase delta chain family. In terms of assembly, F-type ATPases have 2 components, F(1) - the catalytic core - and F(0) - the membrane proton channel. F(1) has five subunits: alpha(3), beta(3), gamma(1), delta(1), epsilon(1). F(0) has three main subunits: a(1), b(2) and c(10-14). The alpha and beta chains form an alternating ring which encloses part of the gamma chain. F(1) is attached to F(0) by a central stalk formed by the gamma and epsilon chains, while a peripheral stalk is formed by the delta and b chains.

It localises to the cell inner membrane. In terms of biological role, f(1)F(0) ATP synthase produces ATP from ADP in the presence of a proton or sodium gradient. F-type ATPases consist of two structural domains, F(1) containing the extramembraneous catalytic core and F(0) containing the membrane proton channel, linked together by a central stalk and a peripheral stalk. During catalysis, ATP synthesis in the catalytic domain of F(1) is coupled via a rotary mechanism of the central stalk subunits to proton translocation. Its function is as follows. This protein is part of the stalk that links CF(0) to CF(1). It either transmits conformational changes from CF(0) to CF(1) or is implicated in proton conduction. In Geobacter sp. (strain M21), this protein is ATP synthase subunit delta.